A 278-amino-acid polypeptide reads, in one-letter code: 2-dehydro-3-deoxyphosphooctonate aldolase (278 aa).

The protein belongs to the KdsA family.

The protein localises to the cytoplasm. It catalyses the reaction D-arabinose 5-phosphate + phosphoenolpyruvate + H2O = 3-deoxy-alpha-D-manno-2-octulosonate-8-phosphate + phosphate. It participates in carbohydrate biosynthesis; 3-deoxy-D-manno-octulosonate biosynthesis; 3-deoxy-D-manno-octulosonate from D-ribulose 5-phosphate: step 2/3. It functions in the pathway bacterial outer membrane biogenesis; lipopolysaccharide biosynthesis. This chain is 2-dehydro-3-deoxyphosphooctonate aldolase, found in Bartonella quintana (strain Toulouse) (Rochalimaea quintana).